The chain runs to 173 residues: NADH-ubiquinone oxidoreductase chain 6 (173 aa).

The next 5 membrane-spanning stretches (helical) occupy residues 1–21 (MTYF…AVAS), 27–47 (YGVL…LSLG), 48–68 (VSFI…VVFV), 87–107 (VVIY…VGDF), and 139–159 (WGAG…FVVL).

It belongs to the complex I subunit 6 family.

It is found in the mitochondrion membrane. It catalyses the reaction a ubiquinone + NADH + 5 H(+)(in) = a ubiquinol + NAD(+) + 4 H(+)(out). Functionally, core subunit of the mitochondrial membrane respiratory chain NADH dehydrogenase (Complex I) that is believed to belong to the minimal assembly required for catalysis. Complex I functions in the transfer of electrons from NADH to the respiratory chain. The immediate electron acceptor for the enzyme is believed to be ubiquinone. This chain is NADH-ubiquinone oxidoreductase chain 6 (MT-ND6), found in Struthio camelus (Common ostrich).